A 593-amino-acid chain; its full sequence is Monoterpene synthase 7, chloroplastic (593 aa).

A chloroplast-targeting transit peptide spans 1-39 (MSVSLSFAASATFGFRGGLGGFSRPAAAIKQWRCLPRIQ). Positions 348, 352, 491, and 499 each coordinate Mg(2+). The DDXXD motif motif lies at 348-352 (DDVYD).

It belongs to the terpene synthase family. Tpsa subfamily. It depends on Mg(2+) as a cofactor. Requires Mn(2+) as cofactor. Highly expressed in flowers, petals and sepals, but almost undetectable in vegetative organs.

It localises to the plastid. The protein resides in the chloroplast. It carries out the reaction (2E)-geranyl diphosphate = sabinene + diphosphate. It catalyses the reaction (2E)-geranyl diphosphate = terpinolene + diphosphate. The enzyme catalyses (2E)-geranyl diphosphate = alpha-pinene + diphosphate. The catalysed reaction is (2E)-geranyl diphosphate = beta-pinene + diphosphate. It carries out the reaction (2E)-geranyl diphosphate = beta-myrcene + diphosphate. It catalyses the reaction (2E)-geranyl diphosphate = alpha-terpinene + diphosphate. The enzyme catalyses (2E)-geranyl diphosphate = beta-phellandrene + diphosphate. The catalysed reaction is (2E)-geranyl diphosphate = gamma-terpinene + diphosphate. It participates in secondary metabolite biosynthesis; terpenoid biosynthesis. Its function is as follows. Monoterpene synthase involved in the biosynthesis of volatile compounds present in floral scent. Mediates the conversion of (2E)-geranyl diphosphate (GPP) into sabinene and sub-products such as alpha-thujene, alpha-pinene, beta-pinene, myrcene, alpha-phellandrene, alpha-terpinene, beta-phellandrene, gamma-terpinene and terpinolene. Unable to use farnesyl diphosphate (FPP) as substrate. This Hedychium coronarium (White butterfly ginger-lily) protein is Monoterpene synthase 7, chloroplastic.